Consider the following 436-residue polypeptide: MRHSIRLTAALLLAFIACFSFPLSAMALEGEYIAIRKEGAGRIALVLGKPLAEGGKASAWSAELDREIREGLAFTGIFNMIPPPLNLFETGGSGKRTLNFGALNSIGAEIFAGGSLASEAGRVKLSMAVYETFGAKPILSKTYSGRPDELRTIAHAFCADLVKLLTGRRSVFGSNIVFVSNRSGFKEIYSCAFDGGSLSQLTRSRSISLTPALSPDGTRLAFTDYTSGRPGLKIMNMADRRISAVRQSGVSIDPGWRSNGEVATTLSFEGDQDIYLVRPDGTLSRKVTSSRGIDLSPSFSPDGTKMAFVSARFGNPQVFILDLGTGQTRRLTYNGNYNTQPSWSPGGDKIAYTTMEKNGEINIFTIRPDGSGATRLTSGARENESPSWSPGGDMIVFTSGRQGQKKLYVMNANGDNQRRLLQMEGEQMQPSWSFIP.

Positions 1–27 are cleaved as a signal peptide; it reads MRHSIRLTAALLLAFIACFSFPLSAMA.

The protein belongs to the TolB family.

Its subcellular location is the periplasm. This Chlorobium luteolum (strain DSM 273 / BCRC 81028 / 2530) (Pelodictyon luteolum) protein is Protein TolB homolog.